The primary structure comprises 401 residues: Deoxyhypusine synthase-like protein (401 aa).

The protein belongs to the deoxyhypusine synthase family.

The protein is Deoxyhypusine synthase-like protein of Thermosynechococcus vestitus (strain NIES-2133 / IAM M-273 / BP-1).